The sequence spans 470 residues: tRNA (guanine(37)-N(1))-methyltransferase (470 aa).

S-adenosyl-L-methionine is bound by residues 304–305 (DL), 332–333 (DG), and Asn-370.

Belongs to the class I-like SAM-binding methyltransferase superfamily. TRM5/TYW2 family. Monomer.

It localises to the mitochondrion matrix. It is found in the nucleus. The protein resides in the cytoplasm. The enzyme catalyses guanosine(37) in tRNA + S-adenosyl-L-methionine = N(1)-methylguanosine(37) in tRNA + S-adenosyl-L-homocysteine + H(+). Functionally, specifically methylates the N1 position of guanosine-37 in various cytoplasmic and mitochondrial tRNAs. Methylation is not dependent on the nature of the nucleoside 5' of the target nucleoside. This is the first step in the biosynthesis of wybutosine (yW), a modified base adjacent to the anticodon of tRNAs and required for accurate decoding. This Theileria parva (East coast fever infection agent) protein is tRNA (guanine(37)-N(1))-methyltransferase.